The sequence spans 444 residues: Tubulin beta-6 chain (444 aa).

Glutamine 11, glutamate 69, serine 138, glycine 142, threonine 143, glycine 144, asparagine 204, and asparagine 226 together coordinate GTP. Glutamate 69 serves as a coordination point for Mg(2+).

Belongs to the tubulin family. Dimer of alpha and beta chains. A typical microtubule is a hollow water-filled tube with an outer diameter of 25 nm and an inner diameter of 15 nM. Alpha-beta heterodimers associate head-to-tail to form protofilaments running lengthwise along the microtubule wall with the beta-tubulin subunit facing the microtubule plus end conferring a structural polarity. Microtubules usually have 13 protofilaments but different protofilament numbers can be found in some organisms and specialized cells. The cofactor is Mg(2+). As to expression, expressed in roots, leaf sheaths, anthers, and suspension cultured cells.

It localises to the cytoplasm. It is found in the cytoskeleton. Its function is as follows. Tubulin is the major constituent of microtubules, a cylinder consisting of laterally associated linear protofilaments composed of alpha- and beta-tubulin heterodimers. Microtubules grow by the addition of GTP-tubulin dimers to the microtubule end, where a stabilizing cap forms. Below the cap, tubulin dimers are in GDP-bound state, owing to GTPase activity of alpha-tubulin. In Oryza sativa subsp. japonica (Rice), this protein is Tubulin beta-6 chain (TUBB6).